The sequence spans 219 residues: Adenylate kinase (219 aa).

10–15 (GAGKGT) provides a ligand contact to ATP. Residues 30-59 (STGDMLRAAIREGTELGLKAKSVMESGGLV) are NMP. Residues threonine 31, arginine 36, 57–59 (GLV), 85–88 (GFPR), and glutamine 92 each bind AMP. Residues 122–159 (GRRQHPASGRVYHIEYNPPKVEGKDDVTGEELVQRPDD) form an LID region. ATP is bound by residues arginine 123 and 132 to 133 (VY). Residues arginine 156 and arginine 167 each contribute to the AMP site. Arginine 202 lines the ATP pocket.

It belongs to the adenylate kinase family. Monomer.

The protein resides in the cytoplasm. The enzyme catalyses AMP + ATP = 2 ADP. Its pathway is purine metabolism; AMP biosynthesis via salvage pathway; AMP from ADP: step 1/1. Its function is as follows. Catalyzes the reversible transfer of the terminal phosphate group between ATP and AMP. Plays an important role in cellular energy homeostasis and in adenine nucleotide metabolism. This Acinetobacter baylyi (strain ATCC 33305 / BD413 / ADP1) protein is Adenylate kinase.